Here is a 161-residue protein sequence, read N- to C-terminus: 2-C-methyl-D-erythritol 2,4-cyclodiphosphate synthase (161 aa).

Residues aspartate 10 and histidine 12 each contribute to the a divalent metal cation site. Residues 10–12 and 36–37 contribute to the 4-CDP-2-C-methyl-D-erythritol 2-phosphate site; these read DVH and HS. Residue histidine 44 participates in a divalent metal cation binding. 4-CDP-2-C-methyl-D-erythritol 2-phosphate-binding positions include 58-60, 63-67, and arginine 144; these read DIG and FSDTD.

The protein belongs to the IspF family. Homotrimer. Requires a divalent metal cation as cofactor.

It carries out the reaction 4-CDP-2-C-methyl-D-erythritol 2-phosphate = 2-C-methyl-D-erythritol 2,4-cyclic diphosphate + CMP. It functions in the pathway isoprenoid biosynthesis; isopentenyl diphosphate biosynthesis via DXP pathway; isopentenyl diphosphate from 1-deoxy-D-xylulose 5-phosphate: step 4/6. Involved in the biosynthesis of isopentenyl diphosphate (IPP) and dimethylallyl diphosphate (DMAPP), two major building blocks of isoprenoid compounds. Catalyzes the conversion of 4-diphosphocytidyl-2-C-methyl-D-erythritol 2-phosphate (CDP-ME2P) to 2-C-methyl-D-erythritol 2,4-cyclodiphosphate (ME-CPP) with a corresponding release of cytidine 5-monophosphate (CMP). In Burkholderia ambifaria (strain MC40-6), this protein is 2-C-methyl-D-erythritol 2,4-cyclodiphosphate synthase.